Reading from the N-terminus, the 154-residue chain is Ribosome maturation factor RimP (154 aa).

This sequence belongs to the RimP family.

Its subcellular location is the cytoplasm. In terms of biological role, required for maturation of 30S ribosomal subunits. This Alkaliphilus oremlandii (strain OhILAs) (Clostridium oremlandii (strain OhILAs)) protein is Ribosome maturation factor RimP.